Reading from the N-terminus, the 345-residue chain is Heat stress transcription factor A-2 (345 aa).

A compositionally biased stretch (low complexity) spans G17 to S30. The interval G17–T40 is disordered. A DNA-binding region spans residues P42–N136. The tract at residues S150–L216 is hydrophobic repeat HR-A/B. Positions E231–L238 match the Nuclear localization signal motif. The AHA1 motif lies at E273–D282. A Glycyl lysine isopeptide (Lys-Gly) (interchain with G-Cter in SUMO) cross-link involves residue K315. The short motif at L324–D333 is the AHA2 element. The Nuclear export signal signature appears at M334–L341.

It belongs to the HSF family. Class A subfamily. As to quaternary structure, homotrimer. Interacts with SUMO1. Binds to HSBP. Post-translationally, exhibits temperature-dependent phosphorylation. In terms of processing, sumoylated at Lys-315. Sumoylation represses its function.

Its subcellular location is the cytoplasm. It localises to the nucleus. Its function is as follows. Transcriptional activator that specifically binds DNA sequence 5'-AGAAnnTTCT-3' known as heat shock promoter elements (HSE). Seems to be involved in other environmental stress responses. Activates ascorbate peroxidase 2 (APX2) in addition to several heat shock protein (HSPs). Binds to the promoter of SGIP1 and activates its expression in heat acclimated plants. Involved in the mechanisms necessary for quick response to heat and subsequent heritable transgenerational memory of heat acclimation (global warming) such as early flowering and attenuated immunity; this process includes epigenetic regulation as well as post-transcriptional gene silencing (PTGS). In response to heat, HSFA2 is activated and promotes the expression of REF6 which in turn derepresses HSFA2, thus establishing an inheritable feedback loop able to trigger SGIP1 and subsequent SGIP1-mediated SGS3 degradation; this prevents the biosynthesis of trans-acting siRNA (tasiRNA) and leads to the release of HTT5, which drives early flowering but attenuates immunity. The protein is Heat stress transcription factor A-2 of Arabidopsis thaliana (Mouse-ear cress).